The primary structure comprises 65 residues: U12-theraphotoxin-Cg1a (65 aa).

The N-terminal stretch at 1 to 21 is a signal peptide; it reads MKTSVLLFMLGLTFLFDGLAA. Residues 22–29 constitute a propeptide that is removed on maturation; sequence INLQEGER. 3 cysteine pairs are disulfide-bonded: Cys31-Cys45, Cys38-Cys50, and Cys44-Cys57.

Belongs to the neurotoxin 10 (Hwtx-1) family. 31 (Jztx-15) subfamily. As to expression, expressed by the venom gland.

Its subcellular location is the secreted. Functionally, probable ion channel inhibitor. This Chilobrachys guangxiensis (Chinese earth tiger tarantula) protein is U12-theraphotoxin-Cg1a.